Consider the following 123-residue polypeptide: Large ribosomal subunit protein eL8 (123 aa).

It belongs to the eukaryotic ribosomal protein eL8 family. Part of the 50S ribosomal subunit. Probably part of the RNase P complex.

The protein localises to the cytoplasm. In terms of biological role, multifunctional RNA-binding protein that recognizes the K-turn motif in ribosomal RNA, the RNA component of RNase P, box H/ACA, box C/D and box C'/D' sRNAs. The chain is Large ribosomal subunit protein eL8 from Pyrococcus abyssi (strain GE5 / Orsay).